Reading from the N-terminus, the 218-residue chain is Glycerol-3-phosphate acyltransferase (218 aa).

Helical transmembrane passes span 10-30 (LTLG…FGLI), 60-80 (DLAA…VLLA), 88-108 (PAII…PVWL), 125-145 (SAAW…AFLF), and 165-185 (AFDQ…LIFI).

The protein belongs to the PlsY family. As to quaternary structure, probably interacts with PlsX.

It is found in the cell inner membrane. The enzyme catalyses an acyl phosphate + sn-glycerol 3-phosphate = a 1-acyl-sn-glycero-3-phosphate + phosphate. It participates in lipid metabolism; phospholipid metabolism. Its function is as follows. Catalyzes the transfer of an acyl group from acyl-phosphate (acyl-PO(4)) to glycerol-3-phosphate (G3P) to form lysophosphatidic acid (LPA). This enzyme utilizes acyl-phosphate as fatty acyl donor, but not acyl-CoA or acyl-ACP. This is Glycerol-3-phosphate acyltransferase from Caulobacter vibrioides (strain ATCC 19089 / CIP 103742 / CB 15) (Caulobacter crescentus).